A 394-amino-acid chain; its full sequence is Elongation factor Tu (394 aa).

In terms of domain architecture, tr-type G spans 10-204 (KPHVNIGTIG…AVDSYIPQPV (195 aa)). Residues 19–26 (GHVDHGKT) form a G1 region. 19–26 (GHVDHGKT) is a GTP binding site. Threonine 26 contributes to the Mg(2+) binding site. Positions 60 to 64 (GITIS) are G2. A G3 region spans residues 81–84 (DCPG). Residues 81–85 (DCPGH) and 136–139 (NKID) each bind GTP. The tract at residues 136 to 139 (NKID) is G4. The G5 stretch occupies residues 174–176 (SAL).

This sequence belongs to the TRAFAC class translation factor GTPase superfamily. Classic translation factor GTPase family. EF-Tu/EF-1A subfamily. Monomer.

Its subcellular location is the cytoplasm. The catalysed reaction is GTP + H2O = GDP + phosphate + H(+). In terms of biological role, GTP hydrolase that promotes the GTP-dependent binding of aminoacyl-tRNA to the A-site of ribosomes during protein biosynthesis. The protein is Elongation factor Tu of Rickettsia rickettsii.